The following is a 278-amino-acid chain: Small ribosomal subunit protein uS3 (278 aa).

Residues 39 to 107 form the KH type-2 domain; the sequence is LRKAIAKKYV…KVQLNIVEIS (69 aa). The segment at 244–278 is disordered; sequence AKPKRVTKKAEAEASAEEKPKRAAKKAENITKEEE. Over residues 251–278 the composition is skewed to basic and acidic residues; the sequence is KKAEAEASAEEKPKRAAKKAENITKEEE.

This sequence belongs to the universal ribosomal protein uS3 family. As to quaternary structure, part of the 30S ribosomal subunit. Forms a tight complex with proteins S10 and S14.

Functionally, binds the lower part of the 30S subunit head. Binds mRNA in the 70S ribosome, positioning it for translation. This Dehalococcoides mccartyi (strain ATCC BAA-2266 / KCTC 15142 / 195) (Dehalococcoides ethenogenes (strain 195)) protein is Small ribosomal subunit protein uS3.